The chain runs to 179 residues: Guanosine-3',5'-bis(diphosphate) 3'-pyrophosphohydrolase MESH1 (179 aa).

One can recognise an HD domain in the interval 32–127 (YINHPLGVAR…VKLADKLYNL (96 aa)). Mn(2+) is bound by residues His35, His61, and Asp62. Catalysis depends on nucleophile residues Glu65 and Asp66. Position 122 (Asp122) interacts with Mn(2+).

Belongs to the MESH1 family. Mn(2+) is required as a cofactor.

The catalysed reaction is guanosine 3',5'-bis(diphosphate) + H2O = GDP + diphosphate + H(+). Its function is as follows. ppGpp hydrolyzing enzyme involved in starvation response. This is Guanosine-3',5'-bis(diphosphate) 3'-pyrophosphohydrolase MESH1 (hddc3) from Xenopus tropicalis (Western clawed frog).